A 743-amino-acid polypeptide reads, in one-letter code: Peptide transporter family 1 (743 aa).

Positions 1-28 (MASEITNGKNGQNGKNGQKEESDSQIAP) are disordered. The segment covering 7–16 (NGKNGQNGKN) has biased composition (low complexity). Transmembrane regions (helical) follow at residues 74–94 (VLFH…ALIA), 104–124 (ILYL…GAVP), 132–152 (AVTV…KPCV), 173–193 (FSLF…FTPI), 207–227 (FSLA…IFMA), 334–354 (VVNP…IYPA), 364–384 (LQKL…SAGL), 597–619 (LPQI…EFSY), 629–649 (VLQA…VVIA), and 659–679 (GEFT…LWLA).

This sequence belongs to the major facilitator superfamily. Proton-dependent oligopeptide transporter (POT/PTR) (TC 2.A.17) family. As to expression, expressed in thorax and abdomen of females: apical epithelial membranes of midgut, rectum, and reproductive tract. Also expressed in neuropil of the central nervous system, with elevated expression within the alpha- and beta-lobes of the mushroom bodies.

The protein localises to the membrane. Functionally, important role in absorption of dietary peptides. High-affinity transporter of alanylalanine. Dipeptide transport activity is proton dependent. In Drosophila melanogaster (Fruit fly), this protein is Peptide transporter family 1 (yin).